Here is a 282-residue protein sequence, read N- to C-terminus: Shikimate dehydrogenase (NADP(+)) (282 aa).

Shikimate is bound by residues 18 to 20 (SRS) and Thr-65. Lys-69 serves as the catalytic Proton acceptor. Residue Glu-81 coordinates NADP(+). Residues Asn-90 and Asp-105 each coordinate shikimate. NADP(+) contacts are provided by residues 130-134 (GAGGA), 154-159 (NRTPAR), and Met-222. Tyr-224 provides a ligand contact to shikimate. Position 245 (Gly-245) interacts with NADP(+).

Belongs to the shikimate dehydrogenase family. Homodimer.

The enzyme catalyses shikimate + NADP(+) = 3-dehydroshikimate + NADPH + H(+). The protein operates within metabolic intermediate biosynthesis; chorismate biosynthesis; chorismate from D-erythrose 4-phosphate and phosphoenolpyruvate: step 4/7. Its function is as follows. Involved in the biosynthesis of the chorismate, which leads to the biosynthesis of aromatic amino acids. Catalyzes the reversible NADPH linked reduction of 3-dehydroshikimate (DHSA) to yield shikimate (SA). In Acidovorax sp. (strain JS42), this protein is Shikimate dehydrogenase (NADP(+)).